Reading from the N-terminus, the 554-residue chain is MRVAASTVLLGVASAASFQQQTQHVLSSGYERAQAGMKPLAEQFVDAAGKPIANIEEAFHGMTAEVKALWDEIKLLVPESAFNHSNWFTKPKPARRRHDWDHVVKGADVQKLWVQGESGEDHRQVDGKLADFNLRVKAVDPSKLGVDKVKQYSGYLDDEANDKHLFYWFFESRNDPKNDPVVLWLNGGPGCSSLTGLFLELGPSSIDKKLKVVNNEFSWNNNASVIFLDQPVNVGYSYSGNSVSNTIAAGKDVYALLSLFFHQFPEYAKQDFHIAGESYAGHYIPVFASEILSHKNRNINLKSILIGNGLTDGLTQYEHYRPMACGKGGYPAVLDESECRSMDNALPRCQSLIQNCYDSGSVWSCVPASIYCNNALIGPYQRTGQNVYDIRGKCEDSSNLCYSALGWISDYLNQQDVMDALGVEVSGYESCNFDINRNFLFQGDWMQPFHRLVPNILKEIPVLIYAGDADYICNWLGNQAWTEALEWPGKKNFNKASIKDLKLAGAEKEYGKVKASGNFTFMQVYQAGHMVPMDQPENSLDFLNRWLGGEWFAK.

A signal peptide spans 1–17; the sequence is MRVAASTVLLGVASAAS. A propeptide spanning residues 18–137 is cleaved from the precursor; that stretch reads FQQQTQHVLS…KLADFNLRVK (120 aa). Intrachain disulfides connect Cys191–Cys431, Cys325–Cys339, Cys349–Cys372, Cys356–Cys365, and Cys394–Cys401. The N-linked (GlcNAc...) asparagine glycan is linked to Asn222. Ser278 is a catalytic residue. Residue Asp470 is part of the active site. An N-linked (GlcNAc...) asparagine glycan is attached at Asn518. His529 is a catalytic residue.

Belongs to the peptidase S10 family.

It localises to the vacuole. The catalysed reaction is Release of a C-terminal amino acid with broad specificity.. In terms of biological role, vacuolar carboxypeptidase involved in degradation of small peptides. Digests preferentially peptides containing an aliphatic or hydrophobic residue in P1' position, as well as methionine, leucine or phenylalanine in P1 position of ester substrate. This Podospora anserina (strain S / ATCC MYA-4624 / DSM 980 / FGSC 10383) (Pleurage anserina) protein is Carboxypeptidase Y homolog A (CPYA).